We begin with the raw amino-acid sequence, 397 residues long: Succinate--CoA ligase [ADP-forming] subunit beta (397 aa).

Residues 9–254 form the ATP-grasp domain; the sequence is KALLRQYGAP…ETEEDPKELA (246 aa). ATP-binding positions include K46, 53–55, E109, S112, and E117; that span reads GRG. 2 residues coordinate Mg(2+): N209 and D223. Substrate-binding positions include N274 and 331-333; that span reads GIM.

It belongs to the succinate/malate CoA ligase beta subunit family. In terms of assembly, heterotetramer of two alpha and two beta subunits. Mg(2+) is required as a cofactor.

The enzyme catalyses succinate + ATP + CoA = succinyl-CoA + ADP + phosphate. The catalysed reaction is GTP + succinate + CoA = succinyl-CoA + GDP + phosphate. It participates in carbohydrate metabolism; tricarboxylic acid cycle; succinate from succinyl-CoA (ligase route): step 1/1. Functionally, succinyl-CoA synthetase functions in the citric acid cycle (TCA), coupling the hydrolysis of succinyl-CoA to the synthesis of either ATP or GTP and thus represents the only step of substrate-level phosphorylation in the TCA. The beta subunit provides nucleotide specificity of the enzyme and binds the substrate succinate, while the binding sites for coenzyme A and phosphate are found in the alpha subunit. This Paracoccus denitrificans (strain Pd 1222) protein is Succinate--CoA ligase [ADP-forming] subunit beta.